The chain runs to 205 residues: Mitochondrial ATP-independent inner membrane protease subunit 2 (205 aa).

Residues glutamate 59 and arginine 104 contribute to the active site.

It belongs to the peptidase S26 family. IMP1 subfamily. In terms of assembly, heterodimer of 2 subunits, IMP1A/B and IMP12.

It is found in the mitochondrion inner membrane. Catalyzes the removal of transit peptides required for the targeting of proteins from the mitochondrial matrix, across the inner membrane, into the inter-membrane space. The chain is Mitochondrial ATP-independent inner membrane protease subunit 2 from Arabidopsis thaliana (Mouse-ear cress).